The chain runs to 162 residues: Anaerobic nitrite reductase (162 aa).

N-acetylserine is present on Ser-2. Positions 9–158 (VFTEEQEALV…LVAAIKFEMK (150 aa)) constitute a Globin domain. Positions 42-46 (EIAPS) match the Homodimerization motif. Heme b contacts are provided by Ser-52, Lys-66, His-70, Arg-100, and His-105. The short motif at 112–124 (NEHFEVTRFALLE) is the Homodimerization element.

This sequence belongs to the plant globin family. As to quaternary structure, homodimer with distinct heme coordination in each subunits. Heme b is required as a cofactor. In terms of tissue distribution, root nodules.

The protein resides in the cytoplasm. The protein localises to the nucleus. The enzyme catalyses Fe(III)-heme b-[protein] + nitric oxide + H2O = Fe(II)-heme b-[protein] + nitrite + 2 H(+). In terms of biological role, phytoglobin that reduces nitrite to nitric oxide (NO) under anoxic conditions (e.g. during flooding or in waterlogged soil) and upon root nodulation. Required for general plant development and during nodulation, especially for the onset of symbiosis. Monitors nitric oxide (NO) levels during early phase of the nitrogen-fixing symbiosis and buffers oxygen in functioning nodules. May not function as an oxygen storage or transport protein. Has an unusually high affinity for O(2) through a hexacoordinate heme iron because of a very low dissociation constant. The polypeptide is Anaerobic nitrite reductase (Parasponia andersonii (Sponia andersonii)).